A 410-amino-acid polypeptide reads, in one-letter code: MVLSQRQRDELNRAIADYLRSNGYEEAYSVFKKEAELDMNEELDKKYAGLLEKKWTSVIRLQKKVMELESKLNEAKEEFTSGGPLGQKRDPKEWIPRPPEKYALSGHRSPVTRVIFHPVFSVMVSASEDATIKVWDYETGDFERTLKGHTDSVQDISFDHSGKLLASCSADMTIKLWDFQGFECIRTMHGHDHNVSSVAIMPNGDHIVSAARDKTIKMWEVQTGYCVKTFTGHREWVRMVRPNQDGTLIASCSNDQTVRVWVVATKECKAELREHEHVVECISWAPESSYSSISEATGSETKKSGKPGPFLLSGSRDKTIKMWDVSTGMCLMTLVGHDNWVRGVLFHSGGKFILSCADDKTLRVWDYKNKRCMKTLNAHEHFVTSLDFHKTAPYVVTGSVDQTVKVWECR.

Residues 1–38 (MVLSQRQRDELNRAIADYLRSNGYEEAYSVFKKEAELD) are required for self-association and interaction with PAFAH1B2 and PAFAH1B3. Residues 1 to 66 (MVLSQRQRDE…SVIRLQKKVM (66 aa)) are interaction with NDE1. The interaction with NDEL1 stretch occupies residues 1–102 (MVLSQRQRDE…EWIPRPPEKY (102 aa)). The region spanning 7 to 39 (QRDELNRAIADYLRSNGYEEAYSVFKKEAELDM) is the LisH domain. The residue at position 53 (Lys-53) is an N6-acetyllysine. Positions 56 to 82 (TSVIRLQKKVMELESKLNEAKEEFTSG) form a coiled coil. Residues 83–410 (GPLGQKRDPK…DQTVKVWECR (328 aa)) are interaction with dynein and dynactin. WD repeat units follow at residues 106 to 147 (GHRS…RTLK), 148 to 187 (GHTD…CIRT), 190 to 229 (GHDH…CVKT), 232 to 271 (GHRE…CKAE), 274 to 333 (EHEH…CLMT), 336 to 377 (GHDN…KTLN), and 378 to 410 (AHEH…WECR). Ser-109 carries the phosphoserine modification. Residues 367-409 (YKNKRCMKTLNAHEHFVTSLDFHKTAPYVVTGSVDQTVKVWEC) are interaction with DCX. The segment at 388–410 (FHKTAPYVVTGSVDQTVKVWECR) is interaction with NDEL1.

The protein belongs to the WD repeat LIS1/nudF family. In terms of assembly, can self-associate. Component of the cytosolic PAF-AH (I) heterotetrameric enzyme, which is composed of PAFAH1B1 (beta), PAFAH1B2 (alpha2) and PAFAH1B3 (alpha1) subunits. The catalytic activity of the enzyme resides in the alpha1 (PAFAH1B3) and alpha2 (PAFAH1B2) subunits, whereas the beta subunit (PAFAH1B1) has regulatory activity. Trimer formation is not essential for the catalytic activity. Interacts with the catalytic dimer of PAF-AH (I) heterotetrameric enzyme: interacts with PAFAH1B2 homodimer (alpha2/alpha2 homodimer), PAFAH1B3 homodimer (alpha1/alpha1 homodimer) and PAFAH1B2-PAFAH1B3 heterodimer (alpha2/alpha1 heterodimer). Interacts with DCX, dynein, dynactin, IQGAP1, KATNB1, NDE1, NDEL1, NUDC and RSN. Interacts with DISC1, and this interaction is enhanced by NDEL1. Interacts with DAB1 when DAB1 is phosphorylated in response to RELN/reelin signaling. Interacts with INTS13. Interacts with DCDC1.

It localises to the cytoplasm. It is found in the cytoskeleton. Its subcellular location is the microtubule organizing center. The protein localises to the centrosome. The protein resides in the spindle. It localises to the nucleus membrane. Functionally, regulatory subunit (beta subunit) of the cytosolic type I platelet-activating factor (PAF) acetylhydrolase (PAF-AH (I)), an enzyme that catalyzes the hydrolyze of the acetyl group at the sn-2 position of PAF and its analogs and participates in PAF inactivation. Regulates the PAF-AH (I) activity in a catalytic dimer composition-dependent manner. Positively regulates the activity of the minus-end directed microtubule motor protein dynein. May enhance dynein-mediated microtubule sliding by targeting dynein to the microtubule plus end. Required for several dynein- and microtubule-dependent processes such as the maintenance of Golgi integrity, the peripheral transport of microtubule fragments and the coupling of the nucleus and centrosome. Required during brain development for the proliferation of neuronal precursors and the migration of newly formed neurons from the ventricular/subventricular zone toward the cortical plate. Neuronal migration involves a process called nucleokinesis, whereby migrating cells extend an anterior process into which the nucleus subsequently translocates. During nucleokinesis dynein at the nuclear surface may translocate the nucleus towards the centrosome by exerting force on centrosomal microtubules. Also required for proper activation of Rho GTPases and actin polymerization at the leading edge of locomoting cerebellar neurons and postmigratory hippocampal neurons in response to calcium influx triggered via NMDA receptors. May also play a role in other forms of cell locomotion including the migration of fibroblasts during wound healing. Required for dynein recruitment to microtubule plus ends and BICD2-bound cargos. May modulate the Reelin pathway through interaction of the PAF-AH (I) catalytic dimer with VLDLR. In Sus scrofa (Pig), this protein is Platelet-activating factor acetylhydrolase IB subunit alpha.